Reading from the N-terminus, the 316-residue chain is Ribosomal RNA small subunit methyltransferase H (316 aa).

S-adenosyl-L-methionine is bound by residues 35–37 (GGH), D55, F79, D101, and Q108. The interval 291 to 316 (AIKPSKDEVDENTRSRSSVLRIAEKL) is disordered. Residues 294–304 (PSKDEVDENTR) are compositionally biased toward basic and acidic residues.

It belongs to the methyltransferase superfamily. RsmH family.

It localises to the cytoplasm. It catalyses the reaction cytidine(1402) in 16S rRNA + S-adenosyl-L-methionine = N(4)-methylcytidine(1402) in 16S rRNA + S-adenosyl-L-homocysteine + H(+). Specifically methylates the N4 position of cytidine in position 1402 (C1402) of 16S rRNA. In Vibrio atlanticus (strain LGP32) (Vibrio splendidus (strain Mel32)), this protein is Ribosomal RNA small subunit methyltransferase H.